A 498-amino-acid chain; its full sequence is Lysine--tRNA ligase (498 aa).

Residues Glu-407 and Glu-414 each coordinate Mg(2+).

The protein belongs to the class-II aminoacyl-tRNA synthetase family. In terms of assembly, homodimer. The cofactor is Mg(2+).

The protein localises to the cytoplasm. The enzyme catalyses tRNA(Lys) + L-lysine + ATP = L-lysyl-tRNA(Lys) + AMP + diphosphate. This Rhizobium etli (strain ATCC 51251 / DSM 11541 / JCM 21823 / NBRC 15573 / CFN 42) protein is Lysine--tRNA ligase.